The sequence spans 425 residues: Trigger factor (425 aa).

The region spanning 158–231 (GDLVRVNMEV…VEEVYKRTLP (74 aa)) is the PPIase FKBP-type domain.

The protein belongs to the FKBP-type PPIase family. Tig subfamily.

It localises to the cytoplasm. The enzyme catalyses [protein]-peptidylproline (omega=180) = [protein]-peptidylproline (omega=0). Involved in protein export. Acts as a chaperone by maintaining the newly synthesized protein in an open conformation. Functions as a peptidyl-prolyl cis-trans isomerase. This Thermotoga maritima (strain ATCC 43589 / DSM 3109 / JCM 10099 / NBRC 100826 / MSB8) protein is Trigger factor (tig).